Reading from the N-terminus, the 251-residue chain is Cell division protein ZapD (251 aa).

This sequence belongs to the ZapD family. Interacts with FtsZ.

The protein resides in the cytoplasm. Cell division factor that enhances FtsZ-ring assembly. Directly interacts with FtsZ and promotes bundling of FtsZ protofilaments, with a reduction in FtsZ GTPase activity. The polypeptide is Cell division protein ZapD (Paraburkholderia phymatum (strain DSM 17167 / CIP 108236 / LMG 21445 / STM815) (Burkholderia phymatum)).